Reading from the N-terminus, the 536-residue chain is Transcription factor cheR (536 aa).

The segment at residues 19 to 57 (CDRCHRHKLRCERSSVIVNGGVAVPLGPCKRCLKACIPC) is a DNA-binding region (zn(2)-C6 fungal-type). Disordered stretches follow at residues 70-122 (AKTG…LSGT) and 220-243 (ALTD…PREE). Positions 88 to 108 (AASPAKRAPSPARRPTASTPR) are enriched in low complexity.

It is found in the nucleus. Transcription factor; part of the gene cluster that mediates the biosynthesis of chaetoglobosin A which has a unique inhibitory activity against actin polymerization in mammalian cells. Chaetoglobosin A and its intermediates are involved in the morphological differentiation of C.globosum. Binds directly to asymmetric direct repeats present in the promoters of the chaetoglobosin A cluster genes. The sequence is that of Transcription factor cheR from Chaetomium globosum (strain ATCC 6205 / CBS 148.51 / DSM 1962 / NBRC 6347 / NRRL 1970) (Soil fungus).